A 129-amino-acid polypeptide reads, in one-letter code: Small ribosomal subunit protein uS11 (129 aa).

The protein belongs to the universal ribosomal protein uS11 family. Part of the 30S ribosomal subunit. Interacts with proteins S7 and S18. Binds to IF-3.

Located on the platform of the 30S subunit, it bridges several disparate RNA helices of the 16S rRNA. Forms part of the Shine-Dalgarno cleft in the 70S ribosome. The protein is Small ribosomal subunit protein uS11 of Lacticaseibacillus casei (strain BL23) (Lactobacillus casei).